Here is a 161-residue protein sequence, read N- to C-terminus: SsrA-binding protein (161 aa).

This sequence belongs to the SmpB family.

It localises to the cytoplasm. Functionally, required for rescue of stalled ribosomes mediated by trans-translation. Binds to transfer-messenger RNA (tmRNA), required for stable association of tmRNA with ribosomes. tmRNA and SmpB together mimic tRNA shape, replacing the anticodon stem-loop with SmpB. tmRNA is encoded by the ssrA gene; the 2 termini fold to resemble tRNA(Ala) and it encodes a 'tag peptide', a short internal open reading frame. During trans-translation Ala-aminoacylated tmRNA acts like a tRNA, entering the A-site of stalled ribosomes, displacing the stalled mRNA. The ribosome then switches to translate the ORF on the tmRNA; the nascent peptide is terminated with the 'tag peptide' encoded by the tmRNA and targeted for degradation. The ribosome is freed to recommence translation, which seems to be the essential function of trans-translation. This chain is SsrA-binding protein, found in Mycolicibacterium smegmatis (strain ATCC 700084 / mc(2)155) (Mycobacterium smegmatis).